The following is a 137-amino-acid chain: Fluoride-specific ion channel FluC 1 (137 aa).

4 helical membrane passes run 4–24 (LIYI…YYLG), 37–57 (LATL…TTYI), 67–87 (VITG…TFSV), and 98–118 (WGIA…MSGL). The Na(+) site is built by glycine 77 and threonine 80.

This sequence belongs to the fluoride channel Fluc/FEX (TC 1.A.43) family.

The protein localises to the cell membrane. The enzyme catalyses fluoride(in) = fluoride(out). Na(+) is not transported, but it plays an essential structural role and its presence is essential for fluoride channel function. Functionally, fluoride-specific ion channel. Important for reducing fluoride concentration in the cell, thus reducing its toxicity. The polypeptide is Fluoride-specific ion channel FluC 1 (Bacillus cereus (strain ZK / E33L)).